The following is a 738-amino-acid chain: NAD(P)H-quinone oxidoreductase subunit 5, chloroplastic (738 aa).

The next 17 helical transmembrane spans lie at 9–29 (WVIP…LFLI), 39–59 (IWAF…LHLS), 89–109 (VDPL…LVLI), 125–145 (FVYI…SNLI), 147–167 (IYFF…FWFT), 185–205 (GDFG…SLEF), 219–239 (NGIN…GAVA), 258–278 (TPIS…FLLA), 280–300 (LLPL…VGTI), 327–347 (LGYM…FHLI), 354–374 (ALLF…VGYS), 396–416 (TTFL…CFWS), 425–445 (WLYS…TAFY), 542–562 (LFPL…GIPF), 610–630 (SLAI…YSFF), 691–711 (GVID…GEEI), and 717–737 (GRIS…LFFI).

It belongs to the complex I subunit 5 family. In terms of assembly, NDH is composed of at least 16 different subunits, 5 of which are encoded in the nucleus.

It localises to the plastid. It is found in the chloroplast thylakoid membrane. It carries out the reaction a plastoquinone + NADH + (n+1) H(+)(in) = a plastoquinol + NAD(+) + n H(+)(out). The catalysed reaction is a plastoquinone + NADPH + (n+1) H(+)(in) = a plastoquinol + NADP(+) + n H(+)(out). In terms of biological role, NDH shuttles electrons from NAD(P)H:plastoquinone, via FMN and iron-sulfur (Fe-S) centers, to quinones in the photosynthetic chain and possibly in a chloroplast respiratory chain. The immediate electron acceptor for the enzyme in this species is believed to be plastoquinone. Couples the redox reaction to proton translocation, and thus conserves the redox energy in a proton gradient. This Sorghum bicolor (Sorghum) protein is NAD(P)H-quinone oxidoreductase subunit 5, chloroplastic (ndhF).